The chain runs to 248 residues: Probable transcriptional regulatory protein RPD_4171 (248 aa).

The tract at residues 1-22 (MAGHSQFKNIMHRKGKQDAQRS) is disordered.

This sequence belongs to the TACO1 family.

Its subcellular location is the cytoplasm. The protein is Probable transcriptional regulatory protein RPD_4171 of Rhodopseudomonas palustris (strain BisB5).